Here is a 436-residue protein sequence, read N- to C-terminus: Glutamyl-tRNA reductase (436 aa).

Substrate-binding positions include T49–R52, S118, E123–Q125, and Q129. C50 functions as the Nucleophile in the catalytic mechanism. NADP(+) is bound at residue G203–I208.

The protein belongs to the glutamyl-tRNA reductase family. As to quaternary structure, homodimer.

The catalysed reaction is (S)-4-amino-5-oxopentanoate + tRNA(Glu) + NADP(+) = L-glutamyl-tRNA(Glu) + NADPH + H(+). It functions in the pathway porphyrin-containing compound metabolism; protoporphyrin-IX biosynthesis; 5-aminolevulinate from L-glutamyl-tRNA(Glu): step 1/2. Its function is as follows. Catalyzes the NADPH-dependent reduction of glutamyl-tRNA(Glu) to glutamate 1-semialdehyde (GSA). The sequence is that of Glutamyl-tRNA reductase from Actinobacillus pleuropneumoniae serotype 7 (strain AP76).